The sequence spans 339 residues: Heat stress transcription factor C-1a (339 aa).

The stretch at 154 to 217 forms a coiled coil; the sequence is EEEDAAEDVL…LAKLADDPNA (64 aa). The hydrophobic repeat HR-A/B stretch occupies residues 176 to 212; it reads LRHEQTAIGEELARMSQRLQATERRPDQLMSFLAKLA. The interval 227–248 is disordered; sequence AERKRRRQHLPSHEPTVCPLPP. Residues 229-233 carry the Nuclear localization signal motif; sequence RKRRR.

It belongs to the HSF family. Class C subfamily. As to quaternary structure, homotrimer. Exhibits temperature-dependent phosphorylation.

The protein resides in the nucleus. Functionally, transcriptional regulator that specifically binds DNA of heat shock promoter elements (HSE). This Oryza sativa subsp. japonica (Rice) protein is Heat stress transcription factor C-1a (HSFC1A).